Consider the following 349-residue polypeptide: Phosphoribosylformylglycinamidine cyclo-ligase (349 aa).

The protein belongs to the AIR synthase family.

It localises to the cytoplasm. It carries out the reaction 2-formamido-N(1)-(5-O-phospho-beta-D-ribosyl)acetamidine + ATP = 5-amino-1-(5-phospho-beta-D-ribosyl)imidazole + ADP + phosphate + H(+). It functions in the pathway purine metabolism; IMP biosynthesis via de novo pathway; 5-amino-1-(5-phospho-D-ribosyl)imidazole from N(2)-formyl-N(1)-(5-phospho-D-ribosyl)glycinamide: step 2/2. This is Phosphoribosylformylglycinamidine cyclo-ligase from Listeria monocytogenes serovar 1/2a (strain ATCC BAA-679 / EGD-e).